A 285-amino-acid polypeptide reads, in one-letter code: Protease HtpX homolog (285 aa).

The next 2 helical transmembrane spans lie at 7–27 (TAML…MIGG) and 30–50 (GMTI…WFSD). A Zn(2+)-binding site is contributed by His131. Residue Glu132 is part of the active site. Zn(2+) is bound at residue His135. The next 2 membrane-spanning stretches (helical) occupy residues 146–166 (ISAT…FFGG) and 177–197 (IAGI…QMAI). Glu202 provides a ligand contact to Zn(2+).

It belongs to the peptidase M48B family. Zn(2+) serves as cofactor.

It localises to the cell inner membrane. In Burkholderia mallei (strain NCTC 10247), this protein is Protease HtpX homolog.